Reading from the N-terminus, the 186-residue chain is Acireductone dioxygenase (186 aa).

Positions 103, 105, 109, and 147 each coordinate Fe(2+). Residues histidine 103, histidine 105, glutamate 109, and histidine 147 each coordinate Ni(2+).

It belongs to the acireductone dioxygenase (ARD) family. In terms of assembly, monomer. It depends on Fe(2+) as a cofactor. Ni(2+) is required as a cofactor.

It catalyses the reaction 1,2-dihydroxy-5-(methylsulfanyl)pent-1-en-3-one + O2 = 3-(methylsulfanyl)propanoate + CO + formate + 2 H(+). The enzyme catalyses 1,2-dihydroxy-5-(methylsulfanyl)pent-1-en-3-one + O2 = 4-methylsulfanyl-2-oxobutanoate + formate + 2 H(+). The protein operates within amino-acid biosynthesis; L-methionine biosynthesis via salvage pathway; L-methionine from S-methyl-5-thio-alpha-D-ribose 1-phosphate: step 5/6. Its function is as follows. Catalyzes 2 different reactions between oxygen and the acireductone 1,2-dihydroxy-3-keto-5-methylthiopentene (DHK-MTPene) depending upon the metal bound in the active site. Fe-containing acireductone dioxygenase (Fe-ARD) produces formate and 2-keto-4-methylthiobutyrate (KMTB), the alpha-ketoacid precursor of methionine in the methionine recycle pathway. Ni-containing acireductone dioxygenase (Ni-ARD) produces methylthiopropionate, carbon monoxide and formate, and does not lie on the methionine recycle pathway. In Synechococcus sp. (strain CC9605), this protein is Acireductone dioxygenase.